Consider the following 272-residue polypeptide: Shikimate dehydrogenase (NADP(+)) (272 aa).

Residues serine 16–serine 18 and threonine 63 each bind shikimate. Lysine 67 serves as the catalytic Proton acceptor. Glutamate 79 provides a ligand contact to NADP(+). Shikimate-binding residues include asparagine 88 and aspartate 103. Residues glycine 127–alanine 131, asparagine 151–arginine 156, and isoleucine 212 contribute to the NADP(+) site. A shikimate-binding site is contributed by tyrosine 214. Glycine 235 is a binding site for NADP(+).

This sequence belongs to the shikimate dehydrogenase family. Homodimer.

The enzyme catalyses shikimate + NADP(+) = 3-dehydroshikimate + NADPH + H(+). The protein operates within metabolic intermediate biosynthesis; chorismate biosynthesis; chorismate from D-erythrose 4-phosphate and phosphoenolpyruvate: step 4/7. Involved in the biosynthesis of the chorismate, which leads to the biosynthesis of aromatic amino acids. Catalyzes the reversible NADPH linked reduction of 3-dehydroshikimate (DHSA) to yield shikimate (SA). The chain is Shikimate dehydrogenase (NADP(+)) from Staphylococcus epidermidis (strain ATCC 12228 / FDA PCI 1200).